The chain runs to 307 residues: Phosphoribosylaminoimidazole-succinocarboxamide synthase (307 aa).

This sequence belongs to the SAICAR synthetase family.

The catalysed reaction is 5-amino-1-(5-phospho-D-ribosyl)imidazole-4-carboxylate + L-aspartate + ATP = (2S)-2-[5-amino-1-(5-phospho-beta-D-ribosyl)imidazole-4-carboxamido]succinate + ADP + phosphate + 2 H(+). It participates in purine metabolism; IMP biosynthesis via de novo pathway; 5-amino-1-(5-phospho-D-ribosyl)imidazole-4-carboxamide from 5-amino-1-(5-phospho-D-ribosyl)imidazole-4-carboxylate: step 1/2. In Thermobifida fusca (strain YX), this protein is Phosphoribosylaminoimidazole-succinocarboxamide synthase.